A 614-amino-acid polypeptide reads, in one-letter code: WD repeat-containing protein 26 (614 aa).

2 stretches are compositionally biased toward low complexity: residues 1-19 (MQANGAAAAAAGEEPAGSG) and 34-44 (SNGVLSSNNGL). The tract at residues 1–65 (MQANGAAAAA…PGGRKKKRLS (65 aa)) is disordered. Positions 67-99 (ADEDVIRLIGQHLHGLGLNQTVDLLMQESGCRL) constitute a LisH domain. The CTLH domain occupies 100–184 (EHPSATKFRN…EYLEDGKVLE (85 aa)). WD repeat units follow at residues 306–345 (EHCNEVWFCKFSNDGTKLATGSKDTTVIIWQVDPDTHQLK), 352–391 (GHAYGVSYLAWSPDDNYLIACGPDDCSELWLWNVQTGELR), 397–437 (SHED…DSWE), 477–516 (QEDHPIMSFTISRNGRLALLNVATQGVHLWDLQDRVLVRK), 519–561 (GVTQ…PIAE), and 564–604 (GHTR…DNQE).

In terms of assembly, forms homooligomers. Identified in the CTLH complex that contains at least MAEA, RMND5A (or alternatively its paralog RMND5B), GID8, WDR26, and RANBP9 and/or RANBP10. Interacts with DDB1-CUL4A/B E3 ligase complexes.

It localises to the cytoplasm. The protein resides in the nucleus. It is found in the mitochondrion. G-beta-like protein involved in cell signal transduction. Acts as a negative regulator in MAPK signaling pathway. Functions as a scaffolding protein to promote G beta:gamma-mediated PLCB2 plasma membrane translocation and subsequent activation in leukocytes. Core component of the CTLH E3 ubiquitin-protein ligase complex that mediates ubiquitination and subsequent proteasomal degradation of target proteins. Acts as a negative regulator of the canonical Wnt signaling pathway through preventing ubiquitination of beta-catenin CTNNB1 by the beta-catenin destruction complex, thus negatively regulating CTNNB1 degradation. Serves as a scaffold to coordinate PI3K/AKT pathway-driven cell growth and migration. Protects cells from oxidative stress-induced apoptosis via the down-regulation of AP-1 transcriptional activity as well as by inhibiting cytochrome c release from mitochondria. Also protects cells by promoting hypoxia-mediated autophagy and mitophagy. This chain is WD repeat-containing protein 26 (wdr26), found in Xenopus tropicalis (Western clawed frog).